Here is a 692-residue protein sequence, read N- to C-terminus: Proprotein convertase subtilisin/kexin type 9 (692 aa).

The first 30 residues, 1–30 (MGTVSSRRSWWPLPLPLLLLLLLGPAGARA), serve as a signal peptide directing secretion. Positions 31–152 (QEDEDGDYEE…IEEDSSVFAQ (122 aa)) are excised as a propeptide. At tyrosine 38 the chain carries Sulfotyrosine. Serine 47 is subject to Phosphoserine. The 73-residue stretch at 77–149 (TYVVVLKEET…VDYIEEDSSV (73 aa)) folds into the Inhibitor I9 domain. The Peptidase S8 domain occupies 155 to 444 (PWNLERITPA…VLTPNLVAAL (290 aa)). Active-site charge relay system residues include aspartate 186 and histidine 226. Cystine bridges form between cysteine 223–cysteine 255 and cysteine 323–cysteine 358. The active-site Charge relay system is the serine 386. The segment at 450–692 (RAGWQLFCRT…HLVQASQELQ (243 aa)) is C-terminal domain. Disulfide bonds link cysteine 457-cysteine 527, cysteine 477-cysteine 526, and cysteine 486-cysteine 509. N-linked (GlcNAc...) asparagine glycosylation is present at asparagine 533. Disulfide bonds link cysteine 534–cysteine 601, cysteine 552–cysteine 600, cysteine 562–cysteine 588, cysteine 608–cysteine 679, cysteine 626–cysteine 678, and cysteine 635–cysteine 654. Serine 688 bears the Phosphoserine mark.

Belongs to the peptidase S8 family. In terms of assembly, monomer. Can self-associate to form dimers and higher multimers which may have increased LDLR degrading activity. The precursor protein but not the mature protein may form multimers. Interacts with APOB, VLDLR, LRP8/APOER2 and BACE1. The full-length immature form (pro-PCSK9) interacts with SCNN1A, SCNN1B and SCNN1G. The pro-PCSK9 form (via C-terminal domain) interacts with LDLR. Interacts (via the C-terminal domain) with ANXA2 (via repeat Annexin 1); the interaction inhibits the degradation of LDLR. Ca(2+) is required as a cofactor. Cleavage by furin and PCSK5 generates a truncated inactive protein that is unable to induce LDLR degradation. Post-translationally, undergoes autocatalytic cleavage in the endoplasmic reticulum to release the propeptide from the N-terminus and the cleavage of the propeptide is strictly required for its maturation and activation. The cleaved propeptide however remains associated with the catalytic domain through non-covalent interactions, preventing potential substrates from accessing its active site. As a result, it is secreted from cells as a propeptide-containing, enzymatically inactive protein. In terms of processing, phosphorylation protects the propeptide against proteolysis.

The protein localises to the cytoplasm. It localises to the secreted. The protein resides in the endosome. Its subcellular location is the lysosome. It is found in the cell surface. The protein localises to the endoplasmic reticulum. It localises to the golgi apparatus. Its proteolytic activity is autoinhibited by the non-covalent binding of the propeptide to the catalytic domain. Inhibited by EGTA. Its function is as follows. Crucial player in the regulation of plasma cholesterol homeostasis. Binds to low-density lipid receptor family members: low density lipoprotein receptor (LDLR), very low density lipoprotein receptor (VLDLR), apolipoprotein E receptor (LRP1/APOER) and apolipoprotein receptor 2 (LRP8/APOER2), and promotes their degradation in intracellular acidic compartments. Acts via a non-proteolytic mechanism to enhance the degradation of the hepatic LDLR through a clathrin LDLRAP1/ARH-mediated pathway. May prevent the recycling of LDLR from endosomes to the cell surface or direct it to lysosomes for degradation. Can induce ubiquitination of LDLR leading to its subsequent degradation. Inhibits intracellular degradation of APOB via the autophagosome/lysosome pathway in a LDLR-independent manner. Involved in the disposal of non-acetylated intermediates of BACE1 in the early secretory pathway. Inhibits epithelial Na(+) channel (ENaC)-mediated Na(+) absorption by reducing ENaC surface expression primarily by increasing its proteasomal degradation. Regulates neuronal apoptosis via modulation of LRP8/APOER2 levels and related anti-apoptotic signaling pathways. The sequence is that of Proprotein convertase subtilisin/kexin type 9 (PCSK9) from Macaca nemestrina (Pig-tailed macaque).